The primary structure comprises 140 residues: 3-hydroxyacyl-[acyl-carrier-protein] dehydratase FabZ (140 aa).

His48 is an active-site residue.

The protein belongs to the thioester dehydratase family. FabZ subfamily.

Its subcellular location is the cytoplasm. The enzyme catalyses a (3R)-hydroxyacyl-[ACP] = a (2E)-enoyl-[ACP] + H2O. In terms of biological role, involved in unsaturated fatty acids biosynthesis. Catalyzes the dehydration of short chain beta-hydroxyacyl-ACPs and long chain saturated and unsaturated beta-hydroxyacyl-ACPs. In Halalkalibacterium halodurans (strain ATCC BAA-125 / DSM 18197 / FERM 7344 / JCM 9153 / C-125) (Bacillus halodurans), this protein is 3-hydroxyacyl-[acyl-carrier-protein] dehydratase FabZ.